Reading from the N-terminus, the 561-residue chain is Reductase FVEG_12641 (561 aa).

The segment at 1-26 (MGVQSTANLPKETVSHLDTAPTPKPG) is disordered. In terms of domain architecture, MOSC spans 52 to 189 (QQHDGPVFCS…ICKGDTISLL (138 aa)). One can recognise an FAD-binding FR-type domain in the interval 237–342 (SAPKTYTLVD…PGSNPGAMEN (106 aa)). FMN-binding positions include 288–289 (FE), 305–307 (GVS), 313–316 (RGGS), and threonine 362. Residues 474 to 561 (FEVEVDEPDS…GIGRLRIEID (88 aa)) enclose the 2Fe-2S ferredoxin-type domain. [2Fe-2S] cluster is bound at residue cysteine 512. Serine 514 lines the FMN pocket. Cysteine 517, cysteine 520, and cysteine 548 together coordinate [2Fe-2S] cluster.

It belongs to the PDR/VanB family. As to quaternary structure, monomer. FMN serves as cofactor.

In terms of biological role, reductase; part of the Fusarium detoxification of benzoxazolinone cluster 2 (FDB2) involved in the degradation of benzoxazolinones produced by the host plant. Maize, wheat, and rye produce the 2 benzoxazinone phytoanticipins 2,4-dihy-droxy-7-methoxy-1,4-benzoxazin-3-one (DIMBOA) and 2,4-dihydroxy-1,4-benzoxazin-3-one (DIBOA) that, due to their inherent instability once released, spontaneously degrade to the more stable corresponding benzoxazolinones, 6-methoxy-2-benzoxazolinone (MBOA) and 2-benzoxazolinone (BOA), respectively. The first step in the detoxification of benzoxazolinones involves the hydrolysis of the cyclic ester bond of benzoxazolinones by the FDB1 cluster gamma-lactamase MBL1 to aminophenols. MBL1 is able to convert BOA into 2-aminophenol (2-AP), as well as MBOA into 5-methoxy-2-aminophenol (2-AMP). The FDB2 cluster N-malonyltransferase FDB2/NAT1 then metabolizes aminophenols via N-malonylation to non-toxic malonamic acids. FDB2/NAT1 converts 2-AP into N-(2-hydroxyphenyl) malonamic acid (HPMA) and 2-AMP into N-(2-hydroxy-4-methoxyphenyl) malonamic acid (HMPMA). The duplicated dienlactone hydrolases DLH1 and DLH2 may provide redundant function for hydrolyzing the lactone moiety in the BOA molecule. The roles of the amidases an other enzymes encoded by the 2 FDB clusters have not been identified so far. The polypeptide is Reductase FVEG_12641 (Gibberella moniliformis (strain M3125 / FGSC 7600) (Maize ear and stalk rot fungus)).